Reading from the N-terminus, the 255-residue chain is BPI fold-containing family A member 1 (255 aa).

Positions 1–19 (MFHIGSLVVLCGLLAPTTA) are cleaved as a signal peptide. An important for surfactant activity and antibacterial properties region spans residues 87–92 (LLGSLL). N-linked (GlcNAc...) asparagine glycans are attached at residues asparagine 157, asparagine 178, and asparagine 205. A disulfide bridge links cysteine 179 with cysteine 223.

It belongs to the BPI/LBP/Plunc superfamily. Plunc family. As to quaternary structure, monomer. Interacts (via N-terminus) with SCNN1B, a subunit of the heterotrimeric epithelial sodium channel (ENaC); this inhibits proteolytic activation of ENaC. Expressed in trachea, and at lower levels in nasal epithelium.

It is found in the secreted. Its function is as follows. Lipid-binding protein which shows high specificity for the surfactant phospholipid dipalmitoylphosphatidylcholine (DPPC). Plays a role in the innate immune responses of the upper airways. Reduces the surface tension in secretions from airway epithelia and inhibits the formation of biofilm by pathogenic Gram-negative bacteria, such as P.aeruginosa and K.pneumoniae. Negatively regulates proteolytic cleavage of SCNN1G, an event that is required for activation of the epithelial sodium channel (ENaC), and thereby contributes to airway surface liquid homeostasis and proper clearance of mucus. Plays a role in the airway inflammatory response after exposure to irritants. May attract macrophages and neutrophils. The sequence is that of BPI fold-containing family A member 1 (BPIFA1) from Bos taurus (Bovine).